Reading from the N-terminus, the 118-residue chain is Ribonuclease P protein component (118 aa).

It belongs to the RnpA family. In terms of assembly, consists of a catalytic RNA component (M1 or rnpB) and a protein subunit.

It carries out the reaction Endonucleolytic cleavage of RNA, removing 5'-extranucleotides from tRNA precursor.. In terms of biological role, RNaseP catalyzes the removal of the 5'-leader sequence from pre-tRNA to produce the mature 5'-terminus. It can also cleave other RNA substrates such as 4.5S RNA. The protein component plays an auxiliary but essential role in vivo by binding to the 5'-leader sequence and broadening the substrate specificity of the ribozyme. This is Ribonuclease P protein component from Ureaplasma urealyticum serovar 10 (strain ATCC 33699 / Western).